An 88-amino-acid polypeptide reads, in one-letter code: Small ribosomal subunit protein uS17 (88 aa).

Belongs to the universal ribosomal protein uS17 family. As to quaternary structure, part of the 30S ribosomal subunit.

Its function is as follows. One of the primary rRNA binding proteins, it binds specifically to the 5'-end of 16S ribosomal RNA. The polypeptide is Small ribosomal subunit protein uS17 (Pseudomonas fluorescens (strain ATCC BAA-477 / NRRL B-23932 / Pf-5)).